The following is a 1737-amino-acid chain: Intraflagellar transport protein osm-1 (1737 aa).

7 WD repeats span residues 14–53, 63–103, 110–150, 151–189, 191–229, 233–273, and 511–553; these read DGEA…KDRF, GKKS…NEKK, VQPS…SLYK, TDET…QSKI, TLQV…QQFD, QSEK…WDEG, and DQRS…EQVT. 7 TPR repeats span residues 700-737, 803-836, 848-881, 907-940, 979-1012, 1037-1070, and 1137-1170; these read NDTE…KTSY, SQLY…GKAI, VTLE…KKAV, TGYY…NDAI, HGRF…DDVL, RGDL…SDAY, and GTVH…ELAV.

Belongs to the IFT172 family. As to quaternary structure, component of the IFT complex B composed of at least che-2, che-13, dyf-1, dyf-3, dyf-6, dyf-11, dyf-13, ift-20, ift-74, ift-81, ifta-2, osm-1, osm-5 and osm-6. As to expression, expressed in amphid and phasmid chemosensory neurons, where it appears to concentrate at the base of the transition zones, which correspond to the basal bodies of motile and sensory cilia. Moves in the retrograde direction along cilia and dendrites, suggesting that it is retrieved from the distal endings of the cilia by a retrograde transport pathway that moves it along cilia and then dendrites, back to the neuronal cell body.

It is found in the cell projection. It localises to the cilium. Its function is as follows. Component of the intraflagellar transport (IFT) complex B required for transport of proteins in the motile cilium. May be required for ciliary entrance and transport of specific ciliary cargo proteins such as che-3 which are related to motility. Required for the maintenance and formation of chemosensory cilia that detect chemosensory cues. This chain is Intraflagellar transport protein osm-1, found in Caenorhabditis elegans.